The sequence spans 221 residues: Nuclear phosphoprotein UL3 homolog (221 aa).

This sequence belongs to the alphaherpesvirinae HHV-1 UL3 family. Post-translationally, phosphorylated.

Its subcellular location is the host nucleus. This Varicella-zoster virus (strain Dumas) (HHV-3) protein is Nuclear phosphoprotein UL3 homolog.